The primary structure comprises 1085 residues: SLIT-ROBO Rho GTPase-activating protein 1 (1085 aa).

Residues Ser19–Asp314 form the F-BAR domain. A coiled-coil region spans residues Val351–Met390. Ser416 carries the phosphoserine modification. The disordered stretch occupies residues Tyr475–Arg496. The 189-residue stretch at Gly506–Phe694 folds into the Rho-GAP domain. One can recognise an SH3 domain in the interval Cys743 to Met802. Residues Asp808–Pro822 show a composition bias toward polar residues. The segment at Asp808 to Asp954 is disordered. A phosphoserine mark is found at Ser835 and Ser917. The segment covering Ser922 to Asp931 has biased composition (basic and acidic residues). Ser932 bears the Phosphoserine mark. Residues Arg937 to Gly946 show a composition bias toward polar residues. Residues Glu956–Ala985 adopt a coiled-coil conformation. Residues Lys997–Pro1011 show a composition bias toward polar residues. Disordered stretches follow at residues Lys997 to Phe1038 and Lys1051 to Met1085. Phosphoserine is present on Ser999. The residue at position 1001 (Thr1001) is a Phosphothreonine. Residues Ser1027 to Thr1037 are compositionally biased toward low complexity. Residue Ser1032 is modified to Phosphoserine.

Homodimer. Forms a heterooligomer with SRGAP2 and SRGAP3 through its F-BAR domain. Interacts with ROBO1, CDC42 and RHOA. Interacts with FASLG. As to expression, expressed in brain, lung, kidney, and testis.

GTPase-activating protein for RhoA and Cdc42 small GTPases. Together with CDC42 seems to be involved in the pathway mediating the repulsive signaling of Robo and Slit proteins in neuronal migration. SLIT2, probably through interaction with ROBO1, increases the interaction of SRGAP1 with ROBO1 and inactivates CDC42. The polypeptide is SLIT-ROBO Rho GTPase-activating protein 1 (SRGAP1) (Homo sapiens (Human)).